The chain runs to 101 residues: Large ribosomal subunit protein uL23 (101 aa).

It belongs to the universal ribosomal protein uL23 family. As to quaternary structure, part of the 50S ribosomal subunit. Contacts protein L29, and trigger factor when it is bound to the ribosome.

In terms of biological role, one of the early assembly proteins it binds 23S rRNA. One of the proteins that surrounds the polypeptide exit tunnel on the outside of the ribosome. Forms the main docking site for trigger factor binding to the ribosome. The sequence is that of Large ribosomal subunit protein uL23 from Lactobacillus helveticus (strain DPC 4571).